The chain runs to 184 residues: MSKIGNRTITLDPAKVNLNFQKDHIAVKGPLGQIELKLPPNLPLKFELKDNNLQITRNNELKQSKIFHGTYNALITNAIIGVTQGFEKKLRLVGVGYRANVEGETLNLQLGYSHPIKEKIPKGLTVKVEKNTEITISGISKELVGQFATEVRKWRKPEPYKGKGVLYFDEVIVRKAGKTAEGKK.

The protein belongs to the universal ribosomal protein uL6 family. In terms of assembly, part of the 50S ribosomal subunit.

Functionally, this protein binds to the 23S rRNA, and is important in its secondary structure. It is located near the subunit interface in the base of the L7/L12 stalk, and near the tRNA binding site of the peptidyltransferase center. In Mycoplasma pneumoniae (strain ATCC 29342 / M129 / Subtype 1) (Mycoplasmoides pneumoniae), this protein is Large ribosomal subunit protein uL6.